We begin with the raw amino-acid sequence, 123 residues long: Protein Wnt-7b (123 aa).

Residue Ser-1 is the site of O-palmitoleoyl serine; by PORCN attachment. A disordered linker region spans residues Val-33–Thr-61. Residues Cys-89 and Cys-104 are joined by a disulfide bond. The N-linked (GlcNAc...) asparagine glycan is linked to Asn-90.

It belongs to the Wnt family. Palmitoleoylation is required for efficient binding to frizzled receptors. Depalmitoleoylation leads to Wnt signaling pathway inhibition.

It is found in the secreted. Its subcellular location is the extracellular space. The protein resides in the extracellular matrix. In terms of biological role, ligand for members of the frizzled family of seven transmembrane receptors that functions in the canonical Wnt/beta-catenin signaling pathway. Required for normal fusion of the chorion and the allantois during placenta development. Required for central nervous system (CNS) angiogenesis and blood-brain barrier regulation. The sequence is that of Protein Wnt-7b (WNT7B) from Anser caerulescens (Snow goose).